Consider the following 244-residue polypeptide: Ras-related protein Rab-12 (244 aa).

Met1 bears the N-acetylmethionine mark. Residues 1–10 (MDPGAALQRR) are compositionally biased toward low complexity. Residues 1–37 (MDPGAALQRRAGGGGGLGAGSPALSGGQGRRRKQPPR) form a disordered region. A phosphoserine mark is found at Ser21 and Ser25. Position 52 (Gly52) interacts with GDP. GTP-binding residues include Gly52, Val53, Gly54, Lys55, and Thr56. 4 residues coordinate GDP: Gly54, Lys55, Thr56, and Ser57. Position 56 (Thr56) interacts with Mg(2+). 2 consecutive short sequence motifs (switch) follow at residues 65-79 (DTFC…GVDF) and 97-114 (DTAG…YYRS). Residues Ser73 and Thr74 each coordinate GTP. Positions 74 and 97 each coordinate Mg(2+). Gly100 lines the GTP pocket. Ser106 bears the Phosphoserine; by LRRK2 mark. Positions 155, 156, 158, and 159 each coordinate GDP. GTP-binding residues include Asn155, Lys156, and Asp158. Residues Ser186, Ala187, and Lys188 each contribute to the GTP site. Residues Ala187 and Lys188 each coordinate GDP. A disordered region spans residues 225–244 (QPEPEIPPELPPPRPHVRCC). Pro residues predominate over residues 228–238 (PEIPPELPPPR). S-geranylgeranyl cysteine attachment occurs at residues Cys243 and Cys244.

The protein belongs to the small GTPase superfamily. Rab family. Interacts with RABIF. Interacts with OPTN. Interacts with LRRK2; interaction facilitates phosphorylation of Ser-106. Interacts with GDI1, GDI2, CHM and CHML; these interactions are disrupted by phosphorylation on Ser-106. Interacts with RILPL1 and RILPL2; these interactions are dependent on phosphorylation of Ser-106. Requires Mg(2+) as cofactor. Phosphorylation of Ser-106 in the switch II region by LRRK2 prevents the association of RAB regulatory proteins, including CHM, CHML and RAB GDP dissociation inhibitors GDI1 and GDI2.

The protein resides in the recycling endosome membrane. Its subcellular location is the lysosome membrane. It is found in the golgi apparatus membrane. It localises to the cytoplasmic vesicle. The protein localises to the autophagosome. It carries out the reaction GTP + H2O = GDP + phosphate + H(+). Regulated by guanine nucleotide exchange factors (GEFs) including DENND3 which promote the exchange of bound GDP for free GTP. Regulated by GTPase activating proteins (GAPs) which increase the GTP hydrolysis activity. Inhibited by GDP dissociation inhibitors (GDIs). Functionally, the small GTPases Rab are key regulators of intracellular membrane trafficking, from the formation of transport vesicles to their fusion with membranes. Rabs cycle between an inactive GDP-bound form and an active GTP-bound form that is able to recruit to membranes different sets of downstream effectors directly responsible for vesicle formation, movement, tethering and fusion. RAB12 may play a role in protein transport from recycling endosomes to lysosomes regulating, for instance, the degradation of the transferrin receptor. Involved in autophagy. This Homo sapiens (Human) protein is Ras-related protein Rab-12.